An 807-amino-acid chain; its full sequence is MTYDHRAVEQKWQAYWQSHKSFKTTEDKDKKNFYALDMFPYPSGQGLHVGHPEGYTATDILARMKRMQGFNVLHPMGWDAFGLPAEQYALDTGNNPADFTQKNINTFKRQINSLGFSYDWDREVNTTDPDFYKWTQWIFEKMYEKGLAYEAEVAVNWSPDLGTVVANEEVIDGKTERGGYPVYRKPMRQWMLKITAYADRLIDDLDLVDWPESVKDMQRNWIGRSKGAEVSFAVENHDANIDVFTTRADTMFGVSYIVMAPEHKLVADITTPEQKAAVDAYLKEIEHKSDLERTDLAKDKTGAFTGAYAINPVNGERLPIWISDYVLASYGTGAVMAVPAHDPRDWEFAKKFGLPLKPVVSGGNPEEAVHTEPGVMINSDFLDGLDKQAAIDKMIPWLVEHKVGHEQISYKLRDWLFSRQRYWGEPIPIIHWEDGTTSVVPEDQLPLELPLTSDIKPSGTGESPLANLTDWLNVTDENGRKGRRETNTMPQWAGSSWYYLRYIDPKNPDKLADFDKLKDWLPVDMYIGGAEHAVLHLLYVRFWHKFLYDIGVVPTKEPFQHLYNQGMILGDNHEKMSKSKGNVVNPDDVVDRFGADTLRLYEMFMGPLDASISWSEKGLAGARKFLDRVWRLYTEEDTDENDQLSSKIVADNNDQLKKVYNETVKKVTEDFESMHFNVAISQLMVFINDAYKADTFPREYAEGFVKLLAPIAPHMMEELWAMLGHDDSISYVDWPTFDPAALIANEVEVIFQVNGKLKAKVTVAKDTPKEELEAMAKANEKVAEFIADKTVRKVIAIPNKLVNIVAN.

Positions 40 to 51 match the 'HIGH' region motif; that stretch reads PYPSGQGLHVGH. Residues 575 to 579 carry the 'KMSKS' region motif; sequence KMSKS. Position 578 (lysine 578) interacts with ATP.

It belongs to the class-I aminoacyl-tRNA synthetase family.

Its subcellular location is the cytoplasm. It catalyses the reaction tRNA(Leu) + L-leucine + ATP = L-leucyl-tRNA(Leu) + AMP + diphosphate. This Latilactobacillus sakei subsp. sakei (strain 23K) (Lactobacillus sakei subsp. sakei) protein is Leucine--tRNA ligase.